The primary structure comprises 441 residues: Ribosomal protein uS12 methylthiotransferase RimO (441 aa).

Positions 7–117 (PKISFVSLGC…VLEAVHRAKP (111 aa)) constitute an MTTase N-terminal domain. 6 residues coordinate [4Fe-4S] cluster: cysteine 16, cysteine 52, cysteine 81, cysteine 148, cysteine 152, and cysteine 155. Residues 134-371 (LTPRHYAYLK…MARQQVISAR (238 aa)) form the Radical SAM core domain. Positions 374 to 440 (KRKVGTRQQI…AYDLHGTVAG (67 aa)) constitute a TRAM domain.

Belongs to the methylthiotransferase family. RimO subfamily. [4Fe-4S] cluster serves as cofactor.

The protein localises to the cytoplasm. The catalysed reaction is L-aspartate(89)-[ribosomal protein uS12]-hydrogen + (sulfur carrier)-SH + AH2 + 2 S-adenosyl-L-methionine = 3-methylsulfanyl-L-aspartate(89)-[ribosomal protein uS12]-hydrogen + (sulfur carrier)-H + 5'-deoxyadenosine + L-methionine + A + S-adenosyl-L-homocysteine + 2 H(+). Catalyzes the methylthiolation of an aspartic acid residue of ribosomal protein uS12. The chain is Ribosomal protein uS12 methylthiotransferase RimO from Rhodopseudomonas palustris (strain BisB5).